The primary structure comprises 193 residues: Guanylate kinase (193 aa).

Residues 12–191 (DLLTIVAGPT…AANELWLAMN (180 aa)) enclose the Guanylate kinase-like domain. 19 to 26 (GPTAVGKG) contributes to the ATP binding site.

This sequence belongs to the guanylate kinase family.

Its subcellular location is the cytoplasm. The enzyme catalyses GMP + ATP = GDP + ADP. Essential for recycling GMP and indirectly, cGMP. This chain is Guanylate kinase, found in Tropheryma whipplei (strain TW08/27) (Whipple's bacillus).